Reading from the N-terminus, the 258-residue chain is Acetylglutamate kinase (258 aa).

Substrate is bound by residues 44-45, Arg66, and Asn158; that span reads GG. ATP contacts are provided by residues 181 to 186 and 209 to 211; these read DISSIL and IIT.

It belongs to the acetylglutamate kinase family. ArgB subfamily. Homodimer.

It localises to the cytoplasm. The enzyme catalyses N-acetyl-L-glutamate + ATP = N-acetyl-L-glutamyl 5-phosphate + ADP. Its pathway is amino-acid biosynthesis; L-arginine biosynthesis; N(2)-acetyl-L-ornithine from L-glutamate: step 2/4. In terms of biological role, catalyzes the ATP-dependent phosphorylation of N-acetyl-L-glutamate. The chain is Acetylglutamate kinase from Buchnera aphidicola subsp. Schizaphis graminum (strain Sg).